Reading from the N-terminus, the 272-residue chain is Acetylglutamate kinase (272 aa).

Residues 41 to 42 (GG), R63, and N166 each bind substrate.

Belongs to the acetylglutamate kinase family. ArgB subfamily.

Its subcellular location is the cytoplasm. The enzyme catalyses N-acetyl-L-glutamate + ATP = N-acetyl-L-glutamyl 5-phosphate + ADP. Its pathway is amino-acid biosynthesis; L-arginine biosynthesis; N(2)-acetyl-L-ornithine from L-glutamate: step 2/4. Its function is as follows. Catalyzes the ATP-dependent phosphorylation of N-acetyl-L-glutamate. In Anaeromyxobacter sp. (strain K), this protein is Acetylglutamate kinase.